The sequence spans 274 residues: MGTLSVNQNKLQKRLRRLAGEAITDYNMIEDGDKVMVCLSGGKDSYTMLDVLLHLQKVAPIKFEIVAVNMDQKQPGFPEHVLPAYLKELGVEYHIVEKDTYSVVKELVPEGKTTCSLCSRLRRGTLYTFADEIGATKMALGHHRDDIVETFFLNMFFNGALKGMPPKLRADDGRNVVIRPLAYCSEKDIQAYSDMKEFPIIPCNLCGSQENLQRQVVKDMLVEWERKHPGRTESIFRALQNVAPSQLADRNLFDFTSLKIDENATPRFLDVLNI.

A PP-loop motif motif is present at residues 40–45; the sequence is SGGKDS. [4Fe-4S] cluster contacts are provided by C115, C118, and C206.

The protein belongs to the TtcA family. As to quaternary structure, homodimer. Mg(2+) is required as a cofactor. The cofactor is [4Fe-4S] cluster.

It localises to the cytoplasm. The catalysed reaction is cytidine(32) in tRNA + S-sulfanyl-L-cysteinyl-[cysteine desulfurase] + AH2 + ATP = 2-thiocytidine(32) in tRNA + L-cysteinyl-[cysteine desulfurase] + A + AMP + diphosphate + H(+). It functions in the pathway tRNA modification. Functionally, catalyzes the ATP-dependent 2-thiolation of cytidine in position 32 of tRNA, to form 2-thiocytidine (s(2)C32). The sulfur atoms are provided by the cysteine/cysteine desulfurase (IscS) system. The sequence is that of tRNA-cytidine(32) 2-sulfurtransferase from Pseudomonas putida (strain GB-1).